Here is a 336-residue protein sequence, read N- to C-terminus: HTH-type transcriptional repressor PurR (336 aa).

The HTH lacI-type domain occupies 2-56 (ATIKDVAKLAGVSTTTVSHVINKTRFVAEDTSKAVWDAIQQLNYSPSAVARSLKV). Positions 4–23 (IKDVAKLAGVSTTTVSHVIN) form a DNA-binding region, H-T-H motif. Residues 48-56 (SAVARSLKV) mediate DNA binding. Y73, K188, F219, and D273 together coordinate hypoxanthine.

In terms of assembly, homodimer.

The protein operates within purine metabolism; purine nucleotide biosynthesis [regulation]. Is the main repressor of the genes involved in the de novo synthesis of purine nucleotides, regulating purB, purC, purEK, purF, purHD, purL, purMN and guaBA expression. PurR is allosterically activated to bind its cognate DNA by binding the purine corepressors, hypoxanthine or guanine, thereby effecting transcription repression. The polypeptide is HTH-type transcriptional repressor PurR (Actinobacillus pleuropneumoniae serotype 5b (strain L20)).